A 1378-amino-acid polypeptide reads, in one-letter code: DNA-directed RNA polymerase subunit beta (1378 aa).

This sequence belongs to the RNA polymerase beta chain family. As to quaternary structure, the RNAP catalytic core consists of 2 alpha, 1 beta, 1 beta' and 1 omega subunit. When a sigma factor is associated with the core the holoenzyme is formed, which can initiate transcription.

It carries out the reaction RNA(n) + a ribonucleoside 5'-triphosphate = RNA(n+1) + diphosphate. Functionally, DNA-dependent RNA polymerase catalyzes the transcription of DNA into RNA using the four ribonucleoside triphosphates as substrates. The chain is DNA-directed RNA polymerase subunit beta from Dinoroseobacter shibae (strain DSM 16493 / NCIMB 14021 / DFL 12).